Here is a 195-residue protein sequence, read N- to C-terminus: Small ribosomal subunit protein uS4 (195 aa).

The S4 RNA-binding domain maps to 88–150 (RRLENVVYRL…SKNVELIKLA (63 aa)).

Belongs to the universal ribosomal protein uS4 family. In terms of assembly, part of the 30S ribosomal subunit. Contacts protein S5. The interaction surface between S4 and S5 is involved in control of translational fidelity.

In terms of biological role, one of the primary rRNA binding proteins, it binds directly to 16S rRNA where it nucleates assembly of the body of the 30S subunit. Its function is as follows. With S5 and S12 plays an important role in translational accuracy. The protein is Small ribosomal subunit protein uS4 of Fusobacterium nucleatum subsp. nucleatum (strain ATCC 25586 / DSM 15643 / BCRC 10681 / CIP 101130 / JCM 8532 / KCTC 2640 / LMG 13131 / VPI 4355).